Consider the following 507-residue polypeptide: O-fucosyltransferase 30 (507 aa).

A helical; Signal-anchor for type II membrane protein transmembrane segment spans residues 26-46; the sequence is AIFLCSVSILVVFFIVVFFIT. 4 N-linked (GlcNAc...) asparagine glycosylation sites follow: Asn-110, Asn-146, Asn-398, and Asn-410.

The protein belongs to the glycosyltransferase GT106 family.

It is found in the membrane. It functions in the pathway glycan metabolism. The polypeptide is O-fucosyltransferase 30 (Arabidopsis thaliana (Mouse-ear cress)).